A 462-amino-acid polypeptide reads, in one-letter code: Hydroxymethylglutaryl-CoA synthase (462 aa).

The active-site Proton donor/acceptor is the Glu86. Catalysis depends on Cys120, which acts as the Acyl-thioester intermediate. (3S)-3-hydroxy-3-methylglutaryl-CoA contacts are provided by Cys120, Thr211, His261, Lys270, Asn338, and Ser372. Catalysis depends on His261, which acts as the Proton donor/acceptor.

Belongs to the thiolase-like superfamily. HMG-CoA synthase family.

It carries out the reaction acetoacetyl-CoA + acetyl-CoA + H2O = (3S)-3-hydroxy-3-methylglutaryl-CoA + CoA + H(+). It participates in siderophore biosynthesis. In terms of biological role, hydroxymethylglutaryl-CoA synthase involved in the biosynthesis of siderophore ferrichrome A which is contributing to organismal virulence. The first step of ferrichrome A biosynthesis is performed by the HMG-CoA synthase hcs1 which catalyzes the generation of HMG-CoA and CoA using acetoacetyl-CoA and acetyl-CoA as substrates. The enoyl-CoA isomerase/hydratase fer4 then catalyzes the conversion of hcs1-produced HMG-CoA to methylglutaconyl-CoA. The acyltransferase fer5 then fuses the fer4-generated methylglutaconyl-CoA with sid1-generated hydroxyornithine to yield methylglutaconyl hydroxyornithine. Methylglutaconyl hydroxyornithine is then available for use by the NRPS fer3 to generate ferrichrome A. The chain is Hydroxymethylglutaryl-CoA synthase from Mycosarcoma maydis (Corn smut fungus).